The chain runs to 122 residues: Large ribosomal subunit protein uL14 (122 aa).

It belongs to the universal ribosomal protein uL14 family. As to quaternary structure, part of the 50S ribosomal subunit. Forms a cluster with proteins L3 and L19. In the 70S ribosome, L14 and L19 interact and together make contacts with the 16S rRNA in bridges B5 and B8.

Functionally, binds to 23S rRNA. Forms part of two intersubunit bridges in the 70S ribosome. This chain is Large ribosomal subunit protein uL14, found in Borreliella burgdorferi (strain ZS7) (Borrelia burgdorferi).